Reading from the N-terminus, the 293-residue chain is ATP synthase gamma chain (293 aa).

The protein belongs to the ATPase gamma chain family. In terms of assembly, F-type ATPases have 2 components, CF(1) - the catalytic core - and CF(0) - the membrane proton channel. CF(1) has five subunits: alpha(3), beta(3), gamma(1), delta(1), epsilon(1). CF(0) has three main subunits: a, b and c.

It localises to the cell inner membrane. Produces ATP from ADP in the presence of a proton gradient across the membrane. The gamma chain is believed to be important in regulating ATPase activity and the flow of protons through the CF(0) complex. This is ATP synthase gamma chain from Psychrobacter sp. (strain PRwf-1).